The chain runs to 67 residues: Alpha-conotoxin-like Pu1.1 (67 aa).

The first 21 residues, 1 to 21, serve as a signal peptide directing secretion; sequence MGMRMMFTVFLLVVLATTVVS. A propeptide spanning residues 22-46 is cleaved from the precursor; that stretch reads FTSDRTSDGRNAAFNAFDLIALTAR. At Gln47 the chain carries Pyrrolidone carboxylic acid. 2 disulfide bridges follow: Cys49/Cys55 and Cys50/Cys63. A lacks the Ser-Xaa-Pro motif that is crucial for potent interaction with nAChR region spans residues 51–53; that stretch reads NVP. Cysteine amide is present on Cys63.

The protein belongs to the conotoxin A superfamily. As to expression, expressed by the venom duct.

The protein resides in the secreted. Alpha-conotoxins act on postsynaptic membranes, they bind to the nicotinic acetylcholine receptors (nAChR) and thus inhibit them. Has possibly a distinct nAChR binding mode from other alpha-conotoxins, due to a different three residue motif (lacks the Ser-Xaa-Pro motif). This chain is Alpha-conotoxin-like Pu1.1, found in Conus pulicarius (Flea-bitten cone).